We begin with the raw amino-acid sequence, 339 residues long: Biotin synthase (339 aa).

The region spanning 55 to 282 is the Radical SAM core domain; sequence NAVQLSTLLS…KAVVRLSAGR (228 aa). The [4Fe-4S] cluster site is built by cysteine 70, cysteine 74, and cysteine 77. The [2Fe-2S] cluster site is built by cysteine 114, cysteine 145, cysteine 205, and arginine 277.

Belongs to the radical SAM superfamily. Biotin synthase family. Homodimer. The cofactor is [4Fe-4S] cluster. [2Fe-2S] cluster is required as a cofactor.

The catalysed reaction is (4R,5S)-dethiobiotin + (sulfur carrier)-SH + 2 reduced [2Fe-2S]-[ferredoxin] + 2 S-adenosyl-L-methionine = (sulfur carrier)-H + biotin + 2 5'-deoxyadenosine + 2 L-methionine + 2 oxidized [2Fe-2S]-[ferredoxin]. It participates in cofactor biosynthesis; biotin biosynthesis; biotin from 7,8-diaminononanoate: step 2/2. In terms of biological role, catalyzes the conversion of dethiobiotin (DTB) to biotin by the insertion of a sulfur atom into dethiobiotin via a radical-based mechanism. In Burkholderia ambifaria (strain MC40-6), this protein is Biotin synthase.